Consider the following 231-residue polypeptide: GrpE protein homolog, mitochondrial (231 aa).

The interval 49–71 is disordered; sequence SEKAGEKAEEKAEEQNLSAEEQK.

It belongs to the GrpE family. As to quaternary structure, component of the PAM complex, at least composed of mtHsp70, MGE1, TIM44, PAM16, PAM17 and PAM18.

It localises to the mitochondrion matrix. In terms of biological role, essential component of the PAM complex, a complex required for the translocation of transit peptide-containing proteins from the inner membrane into the mitochondrial matrix in an ATP-dependent manner. Seems to control the nucleotide-dependent binding of SSC1 to substrate proteins. The chain is GrpE protein homolog, mitochondrial (mge1) from Candida glabrata (strain ATCC 2001 / BCRC 20586 / JCM 3761 / NBRC 0622 / NRRL Y-65 / CBS 138) (Yeast).